The chain runs to 325 residues: Tetraacyldisaccharide 4'-kinase (325 aa).

Residue 58–65 coordinates ATP; the sequence is TVGGSGKT.

The protein belongs to the LpxK family.

It catalyses the reaction a lipid A disaccharide + ATP = a lipid IVA + ADP + H(+). Its pathway is glycolipid biosynthesis; lipid IV(A) biosynthesis; lipid IV(A) from (3R)-3-hydroxytetradecanoyl-[acyl-carrier-protein] and UDP-N-acetyl-alpha-D-glucosamine: step 6/6. Functionally, transfers the gamma-phosphate of ATP to the 4'-position of a tetraacyldisaccharide 1-phosphate intermediate (termed DS-1-P) to form tetraacyldisaccharide 1,4'-bis-phosphate (lipid IVA). This is Tetraacyldisaccharide 4'-kinase from Coxiella burnetii (strain RSA 331 / Henzerling II).